The following is a 283-amino-acid chain: Elongation factor Ts (283 aa).

Residues 80–83 (TDFV) are involved in Mg(2+) ion dislocation from EF-Tu.

The protein belongs to the EF-Ts family.

The protein localises to the cytoplasm. In terms of biological role, associates with the EF-Tu.GDP complex and induces the exchange of GDP to GTP. It remains bound to the aminoacyl-tRNA.EF-Tu.GTP complex up to the GTP hydrolysis stage on the ribosome. The sequence is that of Elongation factor Ts from Serratia proteamaculans (strain 568).